A 688-amino-acid chain; its full sequence is Potassium-transporting ATPase ATP-binding subunit (688 aa).

Helical transmembrane passes span 34–54, 62–82, 219–239, and 260–280; these read PVMFVVYLGSWLTTLIWLAIL, AMFTGSIALWLWFTVLFANMA, VALTILLVALTIVFLLATATL, and VLVALLVCLIPTTIGGLLSAI. Aspartate 313 acts as the 4-aspartylphosphate intermediate in catalysis. ATP contacts are provided by residues aspartate 350, glutamate 354, 383 to 390, and lysine 401; that span reads FSAQTRMS. Residues aspartate 524 and aspartate 528 each coordinate Mg(2+). Helical transmembrane passes span 594-614, 622-642, and 662-682; these read FAIIPAAFAATYPQLNALNIM, AILSAVIFNALVIVFLIPLAL, and IYGLGGLLVPFVGIKLIDLLL.

This sequence belongs to the cation transport ATPase (P-type) (TC 3.A.3) family. Type IA subfamily. The system is composed of three essential subunits: KdpA, KdpB and KdpC.

It is found in the cell inner membrane. The enzyme catalyses K(+)(out) + ATP + H2O = K(+)(in) + ADP + phosphate + H(+). In terms of biological role, part of the high-affinity ATP-driven potassium transport (or Kdp) system, which catalyzes the hydrolysis of ATP coupled with the electrogenic transport of potassium into the cytoplasm. This subunit is responsible for energy coupling to the transport system and for the release of the potassium ions to the cytoplasm. This chain is Potassium-transporting ATPase ATP-binding subunit, found in Yersinia pseudotuberculosis serotype I (strain IP32953).